The primary structure comprises 503 residues: Maturase K (503 aa).

This sequence belongs to the intron maturase 2 family. MatK subfamily.

The protein resides in the plastid. It is found in the chloroplast. Its function is as follows. Usually encoded in the trnK tRNA gene intron. Probably assists in splicing its own and other chloroplast group II introns. The sequence is that of Maturase K from Diospyros kaki (Kaki persimmon).